An 88-amino-acid chain; its full sequence is UPF0213 protein SAG0778 (88 aa).

The region spanning 4–80 is the GIY-YIG domain; that stretch reads VPAYMYVLEC…QKTRQAKLTY (77 aa).

This sequence belongs to the UPF0213 family.

The polypeptide is UPF0213 protein SAG0778 (Streptococcus agalactiae serotype V (strain ATCC BAA-611 / 2603 V/R)).